Reading from the N-terminus, the 96-residue chain is Aspartyl/glutamyl-tRNA(Asn/Gln) amidotransferase subunit C (96 aa).

The protein belongs to the GatC family. As to quaternary structure, heterotrimer of A, B and C subunits.

The catalysed reaction is L-glutamyl-tRNA(Gln) + L-glutamine + ATP + H2O = L-glutaminyl-tRNA(Gln) + L-glutamate + ADP + phosphate + H(+). The enzyme catalyses L-aspartyl-tRNA(Asn) + L-glutamine + ATP + H2O = L-asparaginyl-tRNA(Asn) + L-glutamate + ADP + phosphate + 2 H(+). Its function is as follows. Allows the formation of correctly charged Asn-tRNA(Asn) or Gln-tRNA(Gln) through the transamidation of misacylated Asp-tRNA(Asn) or Glu-tRNA(Gln) in organisms which lack either or both of asparaginyl-tRNA or glutaminyl-tRNA synthetases. The reaction takes place in the presence of glutamine and ATP through an activated phospho-Asp-tRNA(Asn) or phospho-Glu-tRNA(Gln). In Bacillus licheniformis (strain ATCC 14580 / DSM 13 / JCM 2505 / CCUG 7422 / NBRC 12200 / NCIMB 9375 / NCTC 10341 / NRRL NRS-1264 / Gibson 46), this protein is Aspartyl/glutamyl-tRNA(Asn/Gln) amidotransferase subunit C.